A 1400-amino-acid polypeptide reads, in one-letter code: DNA-directed RNA polymerase subunit beta' (1400 aa).

Positions 71, 73, 86, and 89 each coordinate Zn(2+). Positions 462, 464, and 466 each coordinate Mg(2+). C820, C893, C900, and C903 together coordinate Zn(2+).

This sequence belongs to the RNA polymerase beta' chain family. As to quaternary structure, the RNAP catalytic core consists of 2 alpha, 1 beta, 1 beta' and 1 omega subunit. When a sigma factor is associated with the core the holoenzyme is formed, which can initiate transcription. Requires Mg(2+) as cofactor. Zn(2+) is required as a cofactor.

It carries out the reaction RNA(n) + a ribonucleoside 5'-triphosphate = RNA(n+1) + diphosphate. DNA-dependent RNA polymerase catalyzes the transcription of DNA into RNA using the four ribonucleoside triphosphates as substrates. This is DNA-directed RNA polymerase subunit beta' from Methylobacterium nodulans (strain LMG 21967 / CNCM I-2342 / ORS 2060).